Here is a 385-residue protein sequence, read N- to C-terminus: Iron uptake system component EfeM (385 aa).

An N-terminal signal peptide occupies residues 1–22 (MNFTKIAVSAGCILALCAGCGA).

It belongs to the EfeM/EfeO family. As to quaternary structure, component of the iron transporter efeUOB/M complex composed of EfeU, EfeM and EfeB; EfeU is essential for the complex formation.

Its subcellular location is the cell membrane. It localises to the membrane raft. Functionally, part of the iron transporter system efeUOB/M involved in iron import. Specifically binds Fe(3+), which is produced by EfeB-mediated oxidation of Fe(2+), and delivers it to the cell membrane permease EfeU. The polypeptide is Iron uptake system component EfeM (Bacillus subtilis (strain 168)).